The chain runs to 128 residues: S-adenosylmethionine decarboxylase proenzyme (128 aa).

Ser-61 serves as the catalytic Schiff-base intermediate with substrate; via pyruvic acid. Residue Ser-61 is modified to Pyruvic acid (Ser); by autocatalysis. His-66 (proton acceptor; for processing activity) is an active-site residue. Cys-81 (proton donor; for catalytic activity) is an active-site residue.

It belongs to the prokaryotic AdoMetDC family. Type 1 subfamily. Heterotetramer of two alpha and two beta chains arranged as a dimer of alpha/beta heterodimers. Pyruvate serves as cofactor. In terms of processing, is synthesized initially as an inactive proenzyme. Formation of the active enzyme involves a self-maturation process in which the active site pyruvoyl group is generated from an internal serine residue via an autocatalytic post-translational modification. Two non-identical subunits are generated from the proenzyme in this reaction, and the pyruvate is formed at the N-terminus of the alpha chain, which is derived from the carboxyl end of the proenzyme. The post-translation cleavage follows an unusual pathway, termed non-hydrolytic serinolysis, in which the side chain hydroxyl group of the serine supplies its oxygen atom to form the C-terminus of the beta chain, while the remainder of the serine residue undergoes an oxidative deamination to produce ammonia and the pyruvoyl group blocking the N-terminus of the alpha chain.

It catalyses the reaction S-adenosyl-L-methionine + H(+) = S-adenosyl 3-(methylsulfanyl)propylamine + CO2. Its pathway is amine and polyamine biosynthesis; S-adenosylmethioninamine biosynthesis; S-adenosylmethioninamine from S-adenosyl-L-methionine: step 1/1. Catalyzes the decarboxylation of S-adenosylmethionine to S-adenosylmethioninamine (dcAdoMet), the propylamine donor required for the synthesis of the polyamines spermine and spermidine from the diamine putrescine. This Synechococcus sp. (strain WH7803) protein is S-adenosylmethionine decarboxylase proenzyme.